A 300-amino-acid polypeptide reads, in one-letter code: F-box associated domain-containing protein sdz-33 (300 aa).

Positions 5 to 51 (PFPILCLPDFVLQKSLKLMGVVEHLCLSILSKNIKQLIATLKGYPKC) constitute an F-box domain.

Expressed in D-type motor neuron cell bodies.

Functionally, substrate recognition component of E3 ubiquitin-protein ligase complex which mediates the ubiquitination and subsequent proteasomal degradation of target proteins such as mdl-1. Positively regulates axon regeneration by targeting mdl-1 for ubiquitin-mediated degradation; probably thereby reducing levels of mdl-1-mxl-1 heterodimers, allowing free mxl-1 to form complexes with tdpt-1 and thus inhibiting tdpt-1-dependent sumoylation of ets-4. In Caenorhabditis elegans, this protein is F-box associated domain-containing protein sdz-33.